A 100-amino-acid chain; its full sequence is Small ribosomal subunit protein uS14c (100 aa).

Belongs to the universal ribosomal protein uS14 family. In terms of assembly, part of the 30S ribosomal subunit.

It is found in the plastid. It localises to the chloroplast. Its function is as follows. Binds 16S rRNA, required for the assembly of 30S particles. In Coffea arabica (Arabian coffee), this protein is Small ribosomal subunit protein uS14c.